The following is a 1024-amino-acid chain: Importin-8 (1024 aa).

Positions 22–102 (AENELNQSYK…RENMVEAIIR (81 aa)) constitute an Importin N-terminal domain. Residues 896 to 969 (FGRAQGSEEE…YSTPLDCDNG (74 aa)) form a disordered region. 2 stretches are compositionally biased toward acidic residues: residues 902-917 (SEEE…EDEV) and 934-952 (DNED…DEGL).

It belongs to the importin beta family.

Its subcellular location is the cytoplasm. It localises to the nucleus. Its function is as follows. Involved in nuclear protein import, either by acting as autonomous nuclear transport receptor or as an adapter-like protein in association with the importin-beta subunit KPNB1. Acting autonomously, may serve as receptor for nuclear localization signals (NLS) and promote translocation of import substrates through the nuclear pore complex (NPC) by an energy requiring, Ran-dependent mechanism. At the nucleoplasmic side of the NPC, Ran binds to importin, the importin/substrate complex dissociates and importin is re-exported from the nucleus to the cytoplasm where GTP hydrolysis releases Ran. The directionality of nuclear import is thought to be conferred by an asymmetric distribution of the GTP- and GDP-bound forms of Ran between the cytoplasm and nucleus. In vitro mediates the nuclear import of the signal recognition particle protein SRP19. May also be involved in cytoplasm-to-nucleus shuttling of a broad spectrum of other cargos, including Argonaute-microRNAs complexes, the JUN protein, RELA/NF-kappa-B p65 subunit, the translation initiation factor EIF4E and a set of receptor-activated mothers against decapentaplegic homolog (SMAD) transcription factors that play a critical role downstream of the large family of transforming growth factor beta and bone morphogenetic protein (BMP) cytokines. The sequence is that of Importin-8 (ipo8) from Danio rerio (Zebrafish).